The primary structure comprises 249 residues: Phosphate import ATP-binding protein PstB 3 (249 aa).

Residues 4 to 244 enclose the ABC transporter domain; the sequence is LVINNLDLYY…PQDERTENYI (241 aa). An ATP-binding site is contributed by 36–43; that stretch reads GPSGCGKS.

The protein belongs to the ABC transporter superfamily. Phosphate importer (TC 3.A.1.7) family. The complex is composed of two ATP-binding proteins (PstB), two transmembrane proteins (PstC and PstA) and a solute-binding protein (PstS).

The protein resides in the cell membrane. The catalysed reaction is phosphate(out) + ATP + H2O = ADP + 2 phosphate(in) + H(+). Part of the ABC transporter complex PstSACB involved in phosphate import. Responsible for energy coupling to the transport system. In Streptococcus agalactiae serotype Ia (strain ATCC 27591 / A909 / CDC SS700), this protein is Phosphate import ATP-binding protein PstB 3.